A 92-amino-acid polypeptide reads, in one-letter code: PqqA binding protein (92 aa).

This sequence belongs to the PqqD family. In terms of assembly, monomer. Interacts with PqqE.

It participates in cofactor biosynthesis; pyrroloquinoline quinone biosynthesis. Functions as a PqqA binding protein and presents PqqA to PqqE, in the pyrroloquinoline quinone (PQQ) biosynthetic pathway. This chain is PqqA binding protein, found in Stutzerimonas stutzeri (strain A1501) (Pseudomonas stutzeri).